Consider the following 122-residue polypeptide: Large ribosomal subunit protein uL14 (122 aa).

Belongs to the universal ribosomal protein uL14 family. In terms of assembly, part of the 50S ribosomal subunit. Forms a cluster with proteins L3 and L19. In the 70S ribosome, L14 and L19 interact and together make contacts with the 16S rRNA in bridges B5 and B8.

Functionally, binds to 23S rRNA. Forms part of two intersubunit bridges in the 70S ribosome. The protein is Large ribosomal subunit protein uL14 of Polynucleobacter asymbioticus (strain DSM 18221 / CIP 109841 / QLW-P1DMWA-1) (Polynucleobacter necessarius subsp. asymbioticus).